The following is a 691-amino-acid chain: Elongation factor G 1 (691 aa).

One can recognise a tr-type G domain in the interval 8–282 (ERVRNIGIAA…AVVDYLPAPQ (275 aa)). Residues 17–24 (AHIDAGKT), 81–85 (DTPGH), and 135–138 (NKMD) each bind GTP.

Belongs to the TRAFAC class translation factor GTPase superfamily. Classic translation factor GTPase family. EF-G/EF-2 subfamily.

Its subcellular location is the cytoplasm. In terms of biological role, catalyzes the GTP-dependent ribosomal translocation step during translation elongation. During this step, the ribosome changes from the pre-translocational (PRE) to the post-translocational (POST) state as the newly formed A-site-bound peptidyl-tRNA and P-site-bound deacylated tRNA move to the P and E sites, respectively. Catalyzes the coordinated movement of the two tRNA molecules, the mRNA and conformational changes in the ribosome. This Trichodesmium erythraeum (strain IMS101) protein is Elongation factor G 1.